The chain runs to 185 residues: ATP synthase subunit b (185 aa).

The chain crosses the membrane as a helical span at residues 28–48 (VVLVGFAVLMYIVVKFVVPMF).

It belongs to the ATPase B chain family. As to quaternary structure, F-type ATPases have 2 components, F(1) - the catalytic core - and F(0) - the membrane proton channel. F(1) has five subunits: alpha(3), beta(3), gamma(1), delta(1), epsilon(1). F(0) has three main subunits: a(1), b(2) and c(10-14). The alpha and beta chains form an alternating ring which encloses part of the gamma chain. F(1) is attached to F(0) by a central stalk formed by the gamma and epsilon chains, while a peripheral stalk is formed by the delta and b chains.

It localises to the cell membrane. Its function is as follows. F(1)F(0) ATP synthase produces ATP from ADP in the presence of a proton or sodium gradient. F-type ATPases consist of two structural domains, F(1) containing the extramembraneous catalytic core and F(0) containing the membrane proton channel, linked together by a central stalk and a peripheral stalk. During catalysis, ATP synthesis in the catalytic domain of F(1) is coupled via a rotary mechanism of the central stalk subunits to proton translocation. Component of the F(0) channel, it forms part of the peripheral stalk, linking F(1) to F(0). The polypeptide is ATP synthase subunit b (Paenarthrobacter aurescens (strain TC1)).